Here is a 122-residue protein sequence, read N- to C-terminus: RxLR effector protein Avh52 (122 aa).

A signal peptide spans Met1–Ala21. Residues Arg50 to Arg68 carry the RxLR-dEER motif. The tract at residues Ser69–Val86 is TAP1-binding. Residues Lys87 to Lys98 are nuclear localization signal (NLS).

Belongs to the RxLR effector family. In terms of assembly, interacts with host acetyl transferase TAP1.

The protein resides in the secreted. It is found in the host nucleus. Effector that suppresses plant defense responses during the early stages of pathogen infection. Suppresses cell death induced by effectors and PAMPs in plant hosts. Interacts with host acetyltransferase TAP1 and causes TAP1 relocation into the nucleus where it acetylates histones H2A and H3 during early infection, thereby promoting susceptibility of host plant to P.sojae. This Phytophthora sojae (Soybean stem and root rot agent) protein is RxLR effector protein Avh52.